The sequence spans 252 residues: Coenzyme F420:L-glutamate ligase (252 aa).

GTP contacts are provided by residues 11 to 14 (MPLV), 45 to 46 (ET), and lysine 50. Aspartate 115 lines the a divalent metal cation pocket. Asparagine 118 is a binding site for GTP. The a divalent metal cation site is built by aspartate 156, threonine 157, and glutamine 214. A GTP-binding site is contributed by 212-219 (MGQADEGV).

The protein belongs to the CofE family. In terms of assembly, homodimer. It depends on Mg(2+) as a cofactor. Mn(2+) is required as a cofactor. Requires K(+) as cofactor.

It catalyses the reaction oxidized coenzyme F420-0 + GTP + L-glutamate = oxidized coenzyme F420-1 + GDP + phosphate + H(+). The enzyme catalyses oxidized coenzyme F420-1 + GTP + L-glutamate = oxidized coenzyme F420-2 + GDP + phosphate + H(+). The protein operates within cofactor biosynthesis; coenzyme F420 biosynthesis. Catalyzes the GTP-dependent successive addition of two or more gamma-linked L-glutamates to the L-lactyl phosphodiester of 7,8-didemethyl-8-hydroxy-5-deazariboflavin (F420-0) to form coenzyme F420-0-glutamyl-glutamate (F420-2) or polyglutamated F420 derivatives. The polypeptide is Coenzyme F420:L-glutamate ligase (Methanothermobacter thermautotrophicus (strain ATCC 29096 / DSM 1053 / JCM 10044 / NBRC 100330 / Delta H) (Methanobacterium thermoautotrophicum)).